Here is a 1041-residue protein sequence, read N- to C-terminus: SGGFDFSFLPQPPQEKAHDGGRYYLGPGPMGLMGPRGPPGASGAPGPQGFGPAGEPGEPGQTGPAGARGPAGPPGKAGEDGHPGKPGRPGERGVVGPQGARGFPGTPGLPGFKGIRGHNGLDGLKGQPGAPGVKGEPGAPGENGTPGQTGARGLPGERGRVGAPGPAGRGSDGSVGPVGPAGPIGSAGPPGFPGAPGPKGELGPVGNTGPSGPAGPRGEQGLPGVSGPVGPPGNPGANGLTGAKGAAGLPGVAGAPGLPGPRGIPGPVGASGATGARGLVGEPGPAGSKGESGGKGEPGSAGPQGPPGSSGEEGKRGPSGESGSTGPTGPPGLRGGPGSRGLPGADGRAGVIGPAGARGASGPAGVRGPSGDTGRPGEPGLMGARGLPGSPGNVGPAGKEGPAGLPGIDGRPGPIGPAGARGEAGNIGFPGPKGPAGDPGKAGEKGHAGLAGNRGAGAQGPPGLQGVQGGKGEQGPAGPPGFQGLPGPAGTTGEVGKPGERGIPGEFGLPGPAGPRGERGPSGESGAVGPSGAIGSRGPSGPPGPDGNKGEPGVVGAPGTAGPAGSGGLPGERGAAGIPGGKGEKGETGLRGEVGTTGRDGARGAPGAVGAPGPAGATGDRGEAGAAGPAGPAGPRGSPGERGEVGPAGPNGFAGPAGAAGQPGAKGERGTKGPKGENGIVGPTGPVGSAGPAGPNGPAGPAGSRGDGGPPGVTGFPGAAGRTGPPGPSGITGPPGPPGAAGKEGLRGPRGDQGPVGRGETGAGGPPGFTGEKGPSGEPGTAGPPGTAGPQGLLGAPGILGLPGSRGERGLPGVAGAVGEPGPLGIGPPGARGPSGGVPGVNGAPGEAGRDGNPGSDGPPGRDGLPGHKGERGYAGNPGPVGAAGAPGPQGVGPVGKHGNRGEPGPVGSAGPVGALGPRGPSGPQGIRGDKGEAGDKGPRGLPGLKGHNGLQGLPGLAGQHGDQGPGPVGPAGPRGPAGPSGPPGKDGRTGHPGAVGPAGIRGSQGSQGPSGPAGPPGPPGPPGASGGGYDFGYEGDFYRA.

Residues 1–1041 form a disordered region; it reads SGGFDFSFLP…FGYEGDFYRA (1041 aa). A 4-hydroxyproline mark is found at Pro10, Pro13, Pro39, and Pro45. 2 stretches are compositionally biased toward low complexity: residues 25–45 and 55–76; these read LGPG…SGAP and EPGE…PPGK. The span at 77-91 shows a compositional bias: basic and acidic residues; the sequence is AGEDGHPGKPGRPGE. The residue at position 113 (Lys113) is a 5-hydroxylysine; alternate. The O-linked (Gal...) hydroxylysine; alternate glycan is linked to Lys113. Composition is skewed to low complexity over residues 174 to 189 and 235 to 256; these read SVGP…SAGP and PGAN…AGAP. The segment covering 290–299 has biased composition (gly residues); it reads GESGGKGEPG. Positions 300-310 are enriched in low complexity; it reads SAGPQGPPGSS. Gly residues predominate over residues 332 to 341; it reads GLRGGPGSRG. A compositionally biased stretch (low complexity) spans 354 to 370; sequence PAGARGASGPAGVRGPS. Pro376 and Pro379 each carry 4-hydroxyproline. Residues 405–424 are compositionally biased toward low complexity; that stretch reads LPGIDGRPGPIGPAGARGEA. Positions 466-475 are enriched in gly residues; sequence GVQGGKGEQG. 2 stretches are compositionally biased toward low complexity: residues 522–539 and 551–561; these read SGES…SRGP and EPGVVGAPGTA. Residues 562–571 show a composition bias toward gly residues; it reads GPAGSGGLPG. 2 stretches are compositionally biased toward low complexity: residues 594–638 and 645–665; these read VGTT…PRGS and VGPA…QPGA. Positions 666–675 are enriched in basic and acidic residues; sequence KGERGTKGPK. Low complexity predominate over residues 683 to 693; the sequence is PTGPVGSAGPA. Positions 703 to 712 are enriched in gly residues; the sequence is GSRGDGGPPG. Over residues 714–723 the composition is skewed to low complexity; the sequence is TGFPGAAGRT. Residues 754-768 are compositionally biased toward gly residues; it reads GPVGRGETGAGGPPG. Composition is skewed to low complexity over residues 769-803 and 811-821; these read FTGE…LGLP and LPGVAGAVGEP. The segment covering 822 to 840 has biased composition (gly residues); the sequence is GPLGIGPPGARGPSGGVPG. Composition is skewed to low complexity over residues 874 to 887 and 903 to 918; these read YAGN…AGAP and EPGP…ALGP. The span at 928-939 shows a compositional bias: basic and acidic residues; that stretch reads RGDKGEAGDKGP. Over residues 1013–1023 the composition is skewed to pro residues; it reads PAGPPGPPGPP.

This sequence belongs to the fibrillar collagen family. As to quaternary structure, trimers of one alpha 2(I) and two alpha 1(I) chains. Interacts (via C-terminus) with TMEM131 (via PapD-L domain); the interaction is direct and is involved in assembly and TRAPPIII ER-to-Golgi transport complex-dependent secretion of collagen. Prolines at the third position of the tripeptide repeating unit (G-X-Y) are hydroxylated in some or all of the chains. Expressed in bones.

The protein localises to the secreted. It is found in the extracellular space. It localises to the extracellular matrix. Its function is as follows. Type I collagen is a member of group I collagen (fibrillar forming collagen). This chain is Collagen alpha-2(I) chain, found in Paramylodon harlani (Harlan's ground sloth).